The sequence spans 630 residues: Phosphomethylpyrimidine synthase (630 aa).

Disordered stretches follow at residues 1 to 22 (MADIDSRLDTTQATPIGVTTGP) and 97 to 120 (AQREVRPEDNGQLGPDRSGGVPAF). Substrate-binding positions include Asn-224, Met-253, Tyr-282, His-318, 338 to 340 (SRG), 379 to 382 (DGLR), and Glu-418. His-422 contributes to the Zn(2+) binding site. Tyr-445 serves as a coordination point for substrate. Residue His-486 participates in Zn(2+) binding. [4Fe-4S] cluster-binding residues include Cys-566, Cys-569, and Cys-574.

This sequence belongs to the ThiC family. As to quaternary structure, homodimer. The cofactor is [4Fe-4S] cluster.

It carries out the reaction 5-amino-1-(5-phospho-beta-D-ribosyl)imidazole + S-adenosyl-L-methionine = 4-amino-2-methyl-5-(phosphooxymethyl)pyrimidine + CO + 5'-deoxyadenosine + formate + L-methionine + 3 H(+). It participates in cofactor biosynthesis; thiamine diphosphate biosynthesis. Catalyzes the synthesis of the hydroxymethylpyrimidine phosphate (HMP-P) moiety of thiamine from aminoimidazole ribotide (AIR) in a radical S-adenosyl-L-methionine (SAM)-dependent reaction. This is Phosphomethylpyrimidine synthase from Sphingopyxis alaskensis (strain DSM 13593 / LMG 18877 / RB2256) (Sphingomonas alaskensis).